Reading from the N-terminus, the 874-residue chain is Alanine--tRNA ligase (874 aa).

Zn(2+)-binding residues include histidine 562, histidine 566, cysteine 663, and histidine 667.

It belongs to the class-II aminoacyl-tRNA synthetase family. Zn(2+) is required as a cofactor.

The protein localises to the cytoplasm. It carries out the reaction tRNA(Ala) + L-alanine + ATP = L-alanyl-tRNA(Ala) + AMP + diphosphate. Catalyzes the attachment of alanine to tRNA(Ala) in a two-step reaction: alanine is first activated by ATP to form Ala-AMP and then transferred to the acceptor end of tRNA(Ala). Also edits incorrectly charged Ser-tRNA(Ala) and Gly-tRNA(Ala) via its editing domain. The polypeptide is Alanine--tRNA ligase (Bordetella parapertussis (strain 12822 / ATCC BAA-587 / NCTC 13253)).